The following is a 532-amino-acid chain: CTP synthase (532 aa).

Positions 1 to 267 (MTKYIFVTGG…DDIVLEHLQL (267 aa)) are amidoligase domain. Residue Ser-13 coordinates CTP. Ser-13 is a UTP binding site. 14–19 (SIGKGI) is a binding site for ATP. Tyr-54 serves as a coordination point for L-glutamine. Asp-71 contacts ATP. 2 residues coordinate Mg(2+): Asp-71 and Glu-141. CTP contacts are provided by residues 148–150 (DIE), 188–193 (KTKPTQ), and Lys-224. UTP is bound by residues 188–193 (KTKPTQ) and Lys-224. The region spanning 292–532 (RIGLVGKYVS…DFVGAALNNK (241 aa)) is the Glutamine amidotransferase type-1 domain. Gly-354 provides a ligand contact to L-glutamine. Cys-381 (nucleophile; for glutamine hydrolysis) is an active-site residue. L-glutamine is bound by residues 382 to 385 (LGMQ), Glu-405, and Arg-462. Active-site residues include His-507 and Glu-509.

It belongs to the CTP synthase family. As to quaternary structure, homotetramer.

It catalyses the reaction UTP + L-glutamine + ATP + H2O = CTP + L-glutamate + ADP + phosphate + 2 H(+). The catalysed reaction is L-glutamine + H2O = L-glutamate + NH4(+). The enzyme catalyses UTP + NH4(+) + ATP = CTP + ADP + phosphate + 2 H(+). The protein operates within pyrimidine metabolism; CTP biosynthesis via de novo pathway; CTP from UDP: step 2/2. Its activity is regulated as follows. Allosterically activated by GTP, when glutamine is the substrate; GTP has no effect on the reaction when ammonia is the substrate. The allosteric effector GTP functions by stabilizing the protein conformation that binds the tetrahedral intermediate(s) formed during glutamine hydrolysis. Inhibited by the product CTP, via allosteric rather than competitive inhibition. Its function is as follows. Catalyzes the ATP-dependent amination of UTP to CTP with either L-glutamine or ammonia as the source of nitrogen. Regulates intracellular CTP levels through interactions with the four ribonucleotide triphosphates. The sequence is that of CTP synthase from Listeria monocytogenes serotype 4b (strain F2365).